The chain runs to 240 residues: Uridylate kinase (240 aa).

An ATP-binding site is contributed by 12-15; sequence KLSG. Residues 20–25 are involved in allosteric activation by GTP; it reads GEQGNG. G54 is a binding site for UMP. The ATP site is built by G55 and R59. Residues D74 and 135 to 142 contribute to the UMP site; that span reads TGNPYFST. Positions 163, 169, and 172 each coordinate ATP.

This sequence belongs to the UMP kinase family. Homohexamer.

It is found in the cytoplasm. It carries out the reaction UMP + ATP = UDP + ADP. It participates in pyrimidine metabolism; CTP biosynthesis via de novo pathway; UDP from UMP (UMPK route): step 1/1. Its activity is regulated as follows. Allosterically activated by GTP. Inhibited by UTP. Functionally, catalyzes the reversible phosphorylation of UMP to UDP. In Bacillus licheniformis (strain ATCC 14580 / DSM 13 / JCM 2505 / CCUG 7422 / NBRC 12200 / NCIMB 9375 / NCTC 10341 / NRRL NRS-1264 / Gibson 46), this protein is Uridylate kinase.